The primary structure comprises 374 residues: Putative zinc metalloprotease R01501 (374 aa).

His-26 contributes to the Zn(2+) binding site. Glu-27 is an active-site residue. A Zn(2+)-binding site is contributed by His-30. Helical transmembrane passes span Trp-36–Trp-55, Ala-112–Phe-134, Val-301–Leu-323, and Leu-348–Asn-367. A PDZ domain is found at Ala-126–Glu-199.

The protein belongs to the peptidase M50B family. Zn(2+) serves as cofactor.

The protein resides in the cell inner membrane. In Rhizobium meliloti (strain 1021) (Ensifer meliloti), this protein is Putative zinc metalloprotease R01501.